The chain runs to 81 residues: MAVRIRLKRMGAKNNPFYRIVVADSRTPRDGKTIDEIGYYNPLKNPADIKVDVEKAKKWLSYGAQPTDTVKILLKKAGVIE.

Belongs to the bacterial ribosomal protein bS16 family.

This Caldicellulosiruptor bescii (strain ATCC BAA-1888 / DSM 6725 / KCTC 15123 / Z-1320) (Anaerocellum thermophilum) protein is Small ribosomal subunit protein bS16.